A 243-amino-acid polypeptide reads, in one-letter code: Orotidine 5'-phosphate decarboxylase (243 aa).

Substrate contacts are provided by residues aspartate 19, lysine 41, 69–78 (DLKFFDIPAT), threonine 124, arginine 185, glutamine 194, glycine 214, and arginine 215. Lysine 71 serves as the catalytic Proton donor.

The protein belongs to the OMP decarboxylase family. Type 1 subfamily. As to quaternary structure, homodimer.

The enzyme catalyses orotidine 5'-phosphate + H(+) = UMP + CO2. It participates in pyrimidine metabolism; UMP biosynthesis via de novo pathway; UMP from orotate: step 2/2. In terms of biological role, catalyzes the decarboxylation of orotidine 5'-monophosphate (OMP) to uridine 5'-monophosphate (UMP). In Xanthomonas campestris pv. campestris (strain B100), this protein is Orotidine 5'-phosphate decarboxylase.